Reading from the N-terminus, the 303-residue chain is UDP-3-O-acyl-N-acetylglucosamine deacetylase (303 aa).

His-78, His-237, and Asp-241 together coordinate Zn(2+). Residue His-264 is the Proton donor of the active site.

This sequence belongs to the LpxC family. It depends on Zn(2+) as a cofactor.

The catalysed reaction is a UDP-3-O-[(3R)-3-hydroxyacyl]-N-acetyl-alpha-D-glucosamine + H2O = a UDP-3-O-[(3R)-3-hydroxyacyl]-alpha-D-glucosamine + acetate. The protein operates within glycolipid biosynthesis; lipid IV(A) biosynthesis; lipid IV(A) from (3R)-3-hydroxytetradecanoyl-[acyl-carrier-protein] and UDP-N-acetyl-alpha-D-glucosamine: step 2/6. Its function is as follows. Catalyzes the hydrolysis of UDP-3-O-myristoyl-N-acetylglucosamine to form UDP-3-O-myristoylglucosamine and acetate, the committed step in lipid A biosynthesis. This chain is UDP-3-O-acyl-N-acetylglucosamine deacetylase, found in Stenotrophomonas maltophilia (strain R551-3).